Reading from the N-terminus, the 308-residue chain is ATP synthase gamma chain (308 aa).

It belongs to the ATPase gamma chain family. As to quaternary structure, F-type ATPases have 2 components, CF(1) - the catalytic core - and CF(0) - the membrane proton channel. CF(1) has five subunits: alpha(3), beta(3), gamma(1), delta(1), epsilon(1). CF(0) has three main subunits: a, b and c.

It is found in the cell membrane. Produces ATP from ADP in the presence of a proton gradient across the membrane. The gamma chain is believed to be important in regulating ATPase activity and the flow of protons through the CF(0) complex. This chain is ATP synthase gamma chain, found in Mycobacteroides abscessus (strain ATCC 19977 / DSM 44196 / CCUG 20993 / CIP 104536 / JCM 13569 / NCTC 13031 / TMC 1543 / L948) (Mycobacterium abscessus).